We begin with the raw amino-acid sequence, 880 residues long: Leucine--tRNA ligase (880 aa).

A 'HIGH' region motif is present at residues Pro46 to His56. Residues Ser483–Pro502 are disordered. The 'KMSKS' region motif lies at Lys638 to Ser642. Lys641 serves as a coordination point for ATP.

This sequence belongs to the class-I aminoacyl-tRNA synthetase family.

It localises to the cytoplasm. The enzyme catalyses tRNA(Leu) + L-leucine + ATP = L-leucyl-tRNA(Leu) + AMP + diphosphate. The protein is Leucine--tRNA ligase of Xanthomonas oryzae pv. oryzae (strain PXO99A).